Reading from the N-terminus, the 224-residue chain is Putative ribonuclease Z (224 aa).

Zn(2+) is bound by residues Asp-120 and His-184.

It belongs to the RNase Z family. Homodimer. Requires Zn(2+) as cofactor.

The catalysed reaction is Endonucleolytic cleavage of RNA, removing extra 3' nucleotides from tRNA precursor, generating 3' termini of tRNAs. A 3'-hydroxy group is left at the tRNA terminus and a 5'-phosphoryl group is left at the trailer molecule.. In terms of biological role, zinc phosphodiesterase, which displays some tRNA 3'-processing endonuclease activity. Probably involved in tRNA maturation, by removing a 3'-trailer from precursor tRNA. In Mycobacterium tuberculosis (strain CDC 1551 / Oshkosh), this protein is Putative ribonuclease Z (rnz).